Reading from the N-terminus, the 299-residue chain is uncharacterized protein (299 aa).

A compositionally biased stretch (polar residues) spans 1-10 (MTSIIQSPPL). 3 disordered regions span residues 1 to 30 (MTSI…NNNN), 54 to 89 (KLNN…INNN), and 148 to 212 (QDYT…SDYV). Positions 56–89 (NNNNNNNNNNNNNNNNNNNNNNNNSSSNNNINNN) are enriched in low complexity. Composition is skewed to acidic residues over residues 150–169 (YTDE…DEEE) and 177–212 (ECEE…SDYV).

This is an uncharacterized protein from Dictyostelium discoideum (Social amoeba).